We begin with the raw amino-acid sequence, 179 residues long: Interleukin-22b (179 aa).

An N-terminal signal peptide occupies residues M1–A33. Intrachain disulfides connect C40/C132 and C89/C178. N-linked (GlcNAc...) asparagine glycans are attached at residues N54, N68, and N97.

It belongs to the IL-10 family.

It localises to the secreted. Cytokine that contributes to the inflammatory response in vivo. The sequence is that of Interleukin-22b from Mus musculus (Mouse).